Reading from the N-terminus, the 229-residue chain is NAD(P)H-quinone oxidoreductase subunit K, chloroplastic (229 aa).

Residues C43, C44, C108, and C139 each contribute to the [4Fe-4S] cluster site.

It belongs to the complex I 20 kDa subunit family. As to quaternary structure, NDH is composed of at least 16 different subunits, 5 of which are encoded in the nucleus. It depends on [4Fe-4S] cluster as a cofactor.

The protein resides in the plastid. It is found in the chloroplast thylakoid membrane. The catalysed reaction is a plastoquinone + NADH + (n+1) H(+)(in) = a plastoquinol + NAD(+) + n H(+)(out). It catalyses the reaction a plastoquinone + NADPH + (n+1) H(+)(in) = a plastoquinol + NADP(+) + n H(+)(out). NDH shuttles electrons from NAD(P)H:plastoquinone, via FMN and iron-sulfur (Fe-S) centers, to quinones in the photosynthetic chain and possibly in a chloroplast respiratory chain. The immediate electron acceptor for the enzyme in this species is believed to be plastoquinone. Couples the redox reaction to proton translocation, and thus conserves the redox energy in a proton gradient. The sequence is that of NAD(P)H-quinone oxidoreductase subunit K, chloroplastic from Coffea arabica (Arabian coffee).